A 106-amino-acid chain; its full sequence is Large ribosomal subunit protein uL24 (106 aa).

Belongs to the universal ribosomal protein uL24 family. As to quaternary structure, part of the 50S ribosomal subunit.

Functionally, one of two assembly initiator proteins, it binds directly to the 5'-end of the 23S rRNA, where it nucleates assembly of the 50S subunit. Its function is as follows. One of the proteins that surrounds the polypeptide exit tunnel on the outside of the subunit. In Paramagnetospirillum magneticum (strain ATCC 700264 / AMB-1) (Magnetospirillum magneticum), this protein is Large ribosomal subunit protein uL24.